The primary structure comprises 166 residues: Coiled-coil domain-containing protein 12 (166 aa).

Met1 is modified (N-acetylmethionine). A coiled-coil region spans residues 8–28; that stretch reads VGRLEEEALRRKERLKALREK. The span at 21–53 shows a compositional bias: basic and acidic residues; the sequence is RLKALREKTGRKDREDGEPQTKQLREEGEEVGK. The segment at 21-55 is disordered; that stretch reads RLKALREKTGRKDREDGEPQTKQLREEGEEVGKHR. At Lys53 the chain carries N6-acetyllysine. Lys94 is covalently cross-linked (Glycyl lysine isopeptide (Lys-Gly) (interchain with G-Cter in SUMO2)). A coiled-coil region spans residues 115–144; the sequence is DLKRDVAKKLEKLEKRTQRAIAELIRERLK. Residues 146–166 are disordered; the sequence is QEDSLASAVDATTGQEACDSD. Phosphoserine occurs at positions 149 and 165.

The protein is Coiled-coil domain-containing protein 12 (Ccdc12) of Mus musculus (Mouse).